Reading from the N-terminus, the 142-residue chain is Large ribosomal subunit protein uL11 (142 aa).

It belongs to the universal ribosomal protein uL11 family. Part of the ribosomal stalk of the 50S ribosomal subunit. Interacts with L10 and the large rRNA to form the base of the stalk. L10 forms an elongated spine to which L12 dimers bind in a sequential fashion forming a multimeric L10(L12)X complex. Post-translationally, one or more lysine residues are methylated.

Its function is as follows. Forms part of the ribosomal stalk which helps the ribosome interact with GTP-bound translation factors. The chain is Large ribosomal subunit protein uL11 from Xanthomonas campestris pv. campestris (strain 8004).